The sequence spans 64 residues: Large ribosomal subunit protein bL35 (64 aa).

Residues 1–24 (MPKMKSHRGACKRFKKTASGKVKR) are compositionally biased toward basic residues. Residues 1–64 (MPKMKSHRGA…EKQIKRMILA (64 aa)) are disordered. The segment covering 25–35 (ERMYGSHNLEK) has biased composition (basic and acidic residues). Positions 36-45 (KNRKRTRRLH) are enriched in basic residues.

It belongs to the bacterial ribosomal protein bL35 family.

This Prosthecochloris aestuarii (strain DSM 271 / SK 413) protein is Large ribosomal subunit protein bL35.